A 133-amino-acid chain; its full sequence is Large ribosomal subunit protein bL12 (133 aa).

This sequence belongs to the bacterial ribosomal protein bL12 family. In terms of assembly, homodimer. Part of the ribosomal stalk of the 50S ribosomal subunit. Forms a multimeric L10(L12)X complex, where L10 forms an elongated spine to which 2 to 4 L12 dimers bind in a sequential fashion. Binds GTP-bound translation factors.

Forms part of the ribosomal stalk which helps the ribosome interact with GTP-bound translation factors. Is thus essential for accurate translation. The chain is Large ribosomal subunit protein bL12 from Ehrlichia chaffeensis (strain ATCC CRL-10679 / Arkansas).